Reading from the N-terminus, the 119-residue chain is Holo-[acyl-carrier-protein] synthase (119 aa).

Mg(2+) contacts are provided by Asp-8 and Glu-58.

Belongs to the P-Pant transferase superfamily. AcpS family. Mg(2+) serves as cofactor.

The protein localises to the cytoplasm. It carries out the reaction apo-[ACP] + CoA = holo-[ACP] + adenosine 3',5'-bisphosphate + H(+). In terms of biological role, transfers the 4'-phosphopantetheine moiety from coenzyme A to a Ser of acyl-carrier-protein. The protein is Holo-[acyl-carrier-protein] synthase of Bacillus cereus (strain G9842).